The chain runs to 574 residues: Uric acid-xanthine permease (574 aa).

Residues methionine 1–proline 20 are disordered. 12 consecutive transmembrane segments (helical) span residues leucine 77–proline 97, leucine 111–isoleucine 131, tyrosine 141–alanine 161, alanine 188–valine 209, isoleucine 217–threonine 237, leucine 264–leucine 284, cysteine 296–phenylalanine 315, valine 338–valine 361, cysteine 427–isoleucine 447, valine 451–valine 471, phenylalanine 482–glycine 502, and leucine 522–methionine 542. The tract at residues methionine 555–alanine 574 is disordered. Lysine 572 participates in a covalent cross-link: Glycyl lysine isopeptide (Lys-Gly) (interchain with G-Cter in ubiquitin).

It belongs to the nucleobase:cation symporter-2 (NCS2) (TC 2.A.40) family. In terms of processing, ubiquitinated by hulA. Ubiquitination leads to internalization, sorting into the endosomal pathway to the vacuolar lumen where uapA is eventually degraded.

It is found in the cell membrane. In terms of biological role, uric acid-xanthine transporter. The polypeptide is Uric acid-xanthine permease (uapA) (Emericella nidulans (strain FGSC A4 / ATCC 38163 / CBS 112.46 / NRRL 194 / M139) (Aspergillus nidulans)).